A 483-amino-acid chain; its full sequence is Beta-glucosidase 4 (483 aa).

A beta-D-glucoside-binding positions include Gln29, His131, 176-177, Tyr310, and Glu380; that span reads NE. Glu177 serves as the catalytic Proton donor. Glu380 functions as the Nucleophile in the catalytic mechanism. Asn398 carries N-linked (GlcNAc...) asparagine glycosylation. A beta-D-glucoside is bound by residues Trp429, 436–437, and Phe445; that span reads EW.

It belongs to the glycosyl hydrolase 1 family.

The catalysed reaction is Hydrolysis of terminal, non-reducing beta-D-glucosyl residues with release of beta-D-glucose.. The sequence is that of Beta-glucosidase 4 (BGLU4) from Oryza sativa subsp. japonica (Rice).